We begin with the raw amino-acid sequence, 229 residues long: Large ribosomal subunit protein uL1 (229 aa).

Belongs to the universal ribosomal protein uL1 family. Part of the 50S ribosomal subunit.

In terms of biological role, binds directly to 23S rRNA. The L1 stalk is quite mobile in the ribosome, and is involved in E site tRNA release. Its function is as follows. Protein L1 is also a translational repressor protein, it controls the translation of the L11 operon by binding to its mRNA. This is Large ribosomal subunit protein uL1 from Rhodopseudomonas palustris (strain TIE-1).